The chain runs to 86 residues: Cell division topological specificity factor (86 aa).

This sequence belongs to the MinE family.

Its function is as follows. Prevents the cell division inhibition by proteins MinC and MinD at internal division sites while permitting inhibition at polar sites. This ensures cell division at the proper site by restricting the formation of a division septum at the midpoint of the long axis of the cell. The sequence is that of Cell division topological specificity factor from Bordetella petrii (strain ATCC BAA-461 / DSM 12804 / CCUG 43448).